The chain runs to 75 residues: Protease B inhibitor 1 (75 aa).

Threonine 74 bears the Phosphothreonine mark.

Belongs to the protease inhibitor I9 family. As to quaternary structure, part of the heterodimeric LMA1 complex together with the thioredoxin II/TRX2. LMA1 binds to the ATPase SEC18.

The protein localises to the cytoplasm. It localises to the nucleus. In terms of biological role, cytosolic inhibitor of vacuolar proteinase B (yscB), probably regulating protease B activity during limited proteolysis. PBI2 is a component of the LMA1 complex, which is involved in the facilitation of vesicle fusion such as homotypic vacuole and ER-derived COPII vesicle fusion with the Golgi. The protein is Protease B inhibitor 1 (PBI2) of Saccharomyces cerevisiae (Baker's yeast).